The following is a 51-amino-acid chain: Large ribosomal subunit protein eL39 (51 aa).

The protein belongs to the eukaryotic ribosomal protein eL39 family.

This is Large ribosomal subunit protein eL39 (rpl39e) from Aeropyrum pernix (strain ATCC 700893 / DSM 11879 / JCM 9820 / NBRC 100138 / K1).